Reading from the N-terminus, the 192-residue chain is SRP-independent targeting protein 2 homolog (192 aa).

A run of 2 helical transmembrane segments spans residues I16–F36 and W102–V122. The tract at residues L149 to P192 is disordered. Over residues Q151–H167 the composition is skewed to low complexity. Positions R178–P192 are enriched in basic residues.

Belongs to the TMEM208 family.

It localises to the endoplasmic reticulum membrane. Its function is as follows. May function in a SRP (signal recognition particle) and GET (guided entry of tail-anchored proteins) independent pathway for targeting a broad range of substrate proteins to the endoplasmic reticulum. Has a role in meiosis. The polypeptide is SRP-independent targeting protein 2 homolog (Schizosaccharomyces pombe (strain 972 / ATCC 24843) (Fission yeast)).